We begin with the raw amino-acid sequence, 799 residues long: Mitochondrial intermediate peptidase (799 aa).

His-562 serves as a coordination point for Zn(2+). Glu-563 is a catalytic residue. Zn(2+) is bound by residues His-566 and His-569.

It belongs to the peptidase M3 family. It depends on Zn(2+) as a cofactor.

The protein resides in the mitochondrion matrix. It catalyses the reaction Release of an N-terminal octapeptide as second stage of processing of some proteins imported into the mitochondrion.. In terms of biological role, cleaves proteins, imported into the mitochondrion, to their mature size. While most mitochondrial precursor proteins are processed to the mature form in one step by mitochondrial processing peptidase (MPP), the sequential cleavage by MIP of an octapeptide after initial processing by MPP is a required step for a subgroup of nuclear-encoded precursor proteins destined for the matrix or the inner membrane. This is Mitochondrial intermediate peptidase (oct1) from Aspergillus niger (strain ATCC MYA-4892 / CBS 513.88 / FGSC A1513).